The following is a 170-amino-acid chain: Alpha-crystallin A chain (170 aa).

Met1 is subject to N-acetylmethionine. Residues 1-63 (MDVTIQQPWF…RTALDSGISE (63 aa)) form a required for complex formation with BFSP1 and BFSP2 region. Position 6 is a deamidated glutamine; partial (Gln6). Ser45 carries the phosphoserine modification. Gln50 carries the deamidated glutamine; partial modification. In terms of domain architecture, sHSP spans 52–161 (LFRTALDSGI…SERPIPVSRE (110 aa)). 2 positions are modified to N6-acetyllysine: Lys70 and Lys99. Residue His100 participates in Zn(2+) binding. Asn101 is subject to Deamidated asparagine; partial. Zn(2+)-binding residues include Glu102, His107, and His151. A disordered region spans residues 144–170 (PKIVDPSHSERPIPVSREEKPSSAPSS). The span at 148–164 (DPSHSERPIPVSREEKP) shows a compositional bias: basic and acidic residues. Ser159 is a glycosylation site (O-linked (GlcNAc) serine).

This sequence belongs to the small heat shock protein (HSP20) family. Heteromer composed of three CRYAA and one CRYAB subunits. Inter-subunit bridging via zinc ions enhances stability, which is crucial as there is no protein turn over in the lens. Can also form homodimers and homotetramers (dimers of dimers) which serve as the building blocks of homooligomers. Within homooligomers, the zinc-binding motif is created from residues of 3 different molecules. His-100 and Glu-102 from one molecule are ligands of the zinc ion, and His-107 and His-151 residues from additional molecules complete the site with tetrahedral coordination geometry. Part of a complex required for lens intermediate filament formation composed of BFSP1, BFSP2 and CRYAA. Acetylation at Lys-70 may increase chaperone activity. In terms of processing, undergoes age-dependent proteolytical cleavage at the C-terminus.

It is found in the cytoplasm. Its subcellular location is the nucleus. Contributes to the transparency and refractive index of the lens. Acts as a chaperone, preventing aggregation of various proteins under a wide range of stress conditions. Required for the correct formation of lens intermediate filaments as part of a complex composed of BFSP1, BFSP2 and CRYAA. In Bradypus variegatus (Brown-throated three-fingered sloth), this protein is Alpha-crystallin A chain (CRYAA).